The sequence spans 122 residues: Large ribosomal subunit protein bL12 (122 aa).

It belongs to the bacterial ribosomal protein bL12 family. Homodimer. Part of the ribosomal stalk of the 50S ribosomal subunit. Forms a multimeric L10(L12)X complex, where L10 forms an elongated spine to which 2 to 4 L12 dimers bind in a sequential fashion. Binds GTP-bound translation factors.

Forms part of the ribosomal stalk which helps the ribosome interact with GTP-bound translation factors. Is thus essential for accurate translation. This Yersinia enterocolitica serotype O:8 / biotype 1B (strain NCTC 13174 / 8081) protein is Large ribosomal subunit protein bL12.